The chain runs to 84 residues: Small ribosomal subunit protein uS17 (84 aa).

The protein belongs to the universal ribosomal protein uS17 family. Part of the 30S ribosomal subunit.

Its function is as follows. One of the primary rRNA binding proteins, it binds specifically to the 5'-end of 16S ribosomal RNA. In Enterobacter sp. (strain 638), this protein is Small ribosomal subunit protein uS17.